A 274-amino-acid polypeptide reads, in one-letter code: DNA damage-inducible protein D (274 aa).

The chain is DNA damage-inducible protein D (dinD) from Escherichia coli (strain K12).